The following is a 554-amino-acid chain: Glutamine--tRNA ligase (554 aa).

The 'HIGH' region signature appears at 34–44; the sequence is PEPNGYLHIGH. ATP-binding positions include 35 to 37 and 41 to 47; these read EPN and HIGHAKS. L-glutamine-binding residues include aspartate 67 and tyrosine 212. ATP contacts are provided by residues threonine 231, 261–262, and 269–271; these read RL and MSK. The 'KMSKS' region motif lies at 268–272; that stretch reads VMSKR. Residues 317-324 are interaction with tRNA; it reads TKQDNTIE.

The protein belongs to the class-I aminoacyl-tRNA synthetase family. As to quaternary structure, monomer.

The protein localises to the cytoplasm. It carries out the reaction tRNA(Gln) + L-glutamine + ATP = L-glutaminyl-tRNA(Gln) + AMP + diphosphate. In Shigella flexneri serotype 5b (strain 8401), this protein is Glutamine--tRNA ligase.